The primary structure comprises 521 residues: AAA ATPase forming ring-shaped complexes (521 aa).

Residues 4 to 44 (TEDLAALNDRLMAKNHALAEALSRAGKELTKAKSQLAQLAQ) are a coiled coil. 235 to 240 (GNGKTM) provides a ligand contact to ATP.

This sequence belongs to the AAA ATPase family. As to quaternary structure, homohexamer. Assembles into a hexameric ring structure.

In Bifidobacterium longum (strain NCC 2705), this protein is AAA ATPase forming ring-shaped complexes.